The sequence spans 29 residues: Small toxic protein TisB (29 aa).

Residues 6-28 (IAILILKLIVAALQLLDAVLKYL) form a helical membrane-spanning segment.

The protein localises to the cell inner membrane. Functionally, toxic component of a type I toxin-antitoxin (TA) system. Overexpression causes cessation of growth, induces stress-response, a number of membrane protein genes, and leads to cell death. Inhibits ATP synthesis, ATP levels drop drastically quickly after induction. Part of the programmed response to DNA damage; damage leads to increased accumulation of the protein which slows or stops bacterial growth, probably allowing DNA repair before cells continue to grow. The chain is Small toxic protein TisB (tisB) from Escherichia coli (strain K12).